The sequence spans 227 residues: Small ribosomal subunit protein uS3 (227 aa).

Residues 38–106 (LRKFIKDRFY…NVNINIQEIR (69 aa)) form the KH type-2 domain.

It belongs to the universal ribosomal protein uS3 family. As to quaternary structure, part of the 30S ribosomal subunit. Forms a tight complex with proteins S10 and S14.

Its function is as follows. Binds the lower part of the 30S subunit head. Binds mRNA in the 70S ribosome, positioning it for translation. This chain is Small ribosomal subunit protein uS3, found in Syntrophomonas wolfei subsp. wolfei (strain DSM 2245B / Goettingen).